The following is a 304-amino-acid chain: MRLPIFLDTDPGIDDAVAIAAAIFAPELDLQLMTTVAGNVSVEKTTRNALQLLHFWNAEIPLAQGAAVPLVRAPRDAASVHGESGMAGYDFVEHNRKPIGIPAFLAIRDALMRAPEPVTLVAIGPLTNIALLLSQCPECKPYIRRLVIMGGSSGRGNCTPNAEFNIAADPEAAACVFRSGIEIVMCGLDVTNQAILTPDYLATLPELNRTGKMLHALFSHYRSGSMQSGLRMHDLCAIAWLVRPDLFTLKPCFVAVETQGEFTSGTTVVDIDGCLGKPANVKVALDLDVKGFQQWVAEVLALAS.

Residue H233 is part of the active site.

This sequence belongs to the IUNH family. RihC subfamily.

Its function is as follows. Hydrolyzes both purine and pyrimidine ribonucleosides with a broad-substrate specificity. This chain is Non-specific ribonucleoside hydrolase RihC, found in Shigella sonnei (strain Ss046).